A 113-amino-acid chain; its full sequence is Ferredoxin-1 (113 aa).

4Fe-4S ferredoxin-type domains lie at 2-30 (TYIV…YEGE) and 31-60 (NFLV…PDTE). [3Fe-4S] cluster is bound by residues C9 and C17. [4Fe-4S] cluster-binding residues include C21, C40, C43, and C46. Residue C50 participates in [3Fe-4S] cluster binding.

[4Fe-4S] cluster is required as a cofactor. Requires [3Fe-4S] cluster as cofactor.

This is Ferredoxin-1 (fdxA) from Caulobacter vibrioides (strain ATCC 19089 / CIP 103742 / CB 15) (Caulobacter crescentus).